The primary structure comprises 807 residues: Glycerol-3-phosphate acyltransferase (807 aa).

The HXXXXD motif signature appears at 305–310 (CHRSHM).

The protein belongs to the GPAT/DAPAT family.

It localises to the cell inner membrane. The enzyme catalyses sn-glycerol 3-phosphate + an acyl-CoA = a 1-acyl-sn-glycero-3-phosphate + CoA. The protein operates within phospholipid metabolism; CDP-diacylglycerol biosynthesis; CDP-diacylglycerol from sn-glycerol 3-phosphate: step 1/3. The polypeptide is Glycerol-3-phosphate acyltransferase (Aliivibrio fischeri (strain MJ11) (Vibrio fischeri)).